A 296-amino-acid chain; its full sequence is mRNA export factor rsm1 (296 aa).

The C3HC-type zinc-finger motif lies at 40-174 (PWSREEFLRR…VSTHLPEEMT (135 aa)).

It localises to the cytoplasm. Its subcellular location is the nucleus. Involved in the export of mRNA from the nucleus to the cytoplasm. This chain is mRNA export factor rsm1 (rsm1), found in Schizosaccharomyces pombe (strain 972 / ATCC 24843) (Fission yeast).